Here is a 303-residue protein sequence, read N- to C-terminus: HTH-type transcriptional regulator CatM (303 aa).

An HTH lysR-type domain is found at 1–58 (MELRHLRYFVTVVEEQSISKAAEKLCIAQPPLSRQIQKLEEELGIQLFERGFRPAKVT). The H-T-H motif DNA-binding region spans 18-37 (ISKAAEKLCIAQPPLSRQIQ). Positions 99 and 128 each coordinate cis,cis-muconate.

The protein belongs to the LysR transcriptional regulatory family. Homotetramer in solution.

Its function is as follows. Positively regulates the expression of catA, catBCIJFD and benPK in response to cis,cis-muconate. It binds to the catB-catM intercistronic region, to a specific sequence upstream of catA and to the benPK promoter region. Can also repress pca genes. The polypeptide is HTH-type transcriptional regulator CatM (catM) (Acinetobacter baylyi (strain ATCC 33305 / BD413 / ADP1)).